The following is a 537-amino-acid chain: uncharacterized protein (537 aa).

This is an uncharacterized protein from Methanocaldococcus jannaschii (strain ATCC 43067 / DSM 2661 / JAL-1 / JCM 10045 / NBRC 100440) (Methanococcus jannaschii).